We begin with the raw amino-acid sequence, 96 residues long: UPF0235 protein ECA3630 (96 aa).

This sequence belongs to the UPF0235 family.

The protein is UPF0235 protein ECA3630 of Pectobacterium atrosepticum (strain SCRI 1043 / ATCC BAA-672) (Erwinia carotovora subsp. atroseptica).